We begin with the raw amino-acid sequence, 317 residues long: Large ribosomal subunit protein uL10 (317 aa).

The segment covering 280-290 (SASAAPAAGGA) has biased composition (low complexity). The tract at residues 280 to 317 (SASAAPAAGGATEKKEEAKKPESESEEEDDDMGFGLFD) is disordered. Residues 291-302 (TEKKEEAKKPES) are compositionally biased toward basic and acidic residues. Residue Ser-302 is modified to Phosphoserine. A Phosphoserine; by CK1 modification is found at Ser-304.

It belongs to the universal ribosomal protein uL10 family. As to quaternary structure, P0 forms a pentameric complex by interaction with dimers of P1 and P2.

The protein localises to the cytoplasm. The protein resides in the nucleus. In terms of biological role, ribosomal protein P0 is the functional equivalent of E.coli protein L10. This is Large ribosomal subunit protein uL10 (RpLP0) from Drosophila melanogaster (Fruit fly).